A 243-amino-acid chain; its full sequence is Probable transcriptional regulatory protein BP2308 (243 aa).

The segment at 1-21 is disordered; the sequence is MAGHSKWANIQHRKGRQDAKR.

This sequence belongs to the TACO1 family.

The protein resides in the cytoplasm. This is Probable transcriptional regulatory protein BP2308 from Bordetella pertussis (strain Tohama I / ATCC BAA-589 / NCTC 13251).